A 241-amino-acid polypeptide reads, in one-letter code: Fatty acid metabolism regulator protein (241 aa).

The region spanning 11-79 is the HTH gntR-type domain; that stretch reads QSPAALAEEY…HGKPTKVNNI (69 aa). The H-T-H motif DNA-binding region spans 39 to 58; it reads ERDLADKIGVTRTTLREVLQ.

Homodimer.

It is found in the cytoplasm. Multifunctional regulator of fatty acid metabolism. This is Fatty acid metabolism regulator protein from Haemophilus influenzae (strain ATCC 51907 / DSM 11121 / KW20 / Rd).